Consider the following 592-residue polypeptide: Salivary peroxidase/catechol oxidase (592 aa).

Residues M1–A21 form the signal peptide. Cysteines 24 and 37 form a disulfide. An N-linked (GlcNAc...) asparagine glycan is attached at N25. The Proton acceptor role is filled by H110. Positions 111, 187, 189, 191, and 193 each coordinate Ca(2+). The N-linked (GlcNAc...) asparagine glycan is linked to N230. A disulfide bridge connects residues C235 and C244. H353 provides a ligand contact to heme b. The N-linked (GlcNAc...) asparagine glycan is linked to N366. 2 disulfide bridges follow: C452–C509 and C553–C580.

This sequence belongs to the peroxidase family. XPO subfamily. As to expression, female salivary gland.

Its subcellular location is the secreted. The catalysed reaction is 2 catechol + O2 = 2 1,2-benzoquinone + 2 H2O. Inhibits noradrenaline-induced smooth muscle contraction in the host, probably due to the oxidation of noradrenaline, resulting in vasodilation. Exhibits peroxidase activity. This Anopheles albimanus (New world malaria mosquito) protein is Salivary peroxidase/catechol oxidase.